The sequence spans 301 residues: Rhodopsin (301 aa).

The Extracellular segment spans residues 1 to 18 (LHMIHLHWYQYPPMNPMM). A helical membrane pass occupies residues 19-43 (YPLLLIFMLFTGILCLAGNFVTIWV). The Cytoplasmic portion of the chain corresponds to 44–55 (FMNTKSLRTPAN). The chain crosses the membrane as a helical span at residues 56–78 (LLVVNLAMSDFLMMFTMFPPMMV). Topologically, residues 79-92 (TCYYHTWTLGPTFC) are extracellular. C92 and C169 are disulfide-bonded. Residues 93 to 115 (QVYAFLGNLCGCASIWTMVFITF) traverse the membrane as a helical segment. The short motif at 116–118 (DRY) is the 'Ionic lock' involved in activated form stabilization element. Residues 116–134 (DRYNVIVKGVAGEPLSTKK) are Cytoplasmic-facing. Residues 135-155 (ASLWILTIWVLSTTWCIAPFF) form a helical membrane-spanning segment. Topologically, residues 156-182 (GWNHYVPEGNLTGCGTDYLSEDILSRS) are extracellular. N165 carries an N-linked (GlcNAc...) asparagine glycan. Residues 183-204 (YLYVYSTWVYFLPLAITIYCYV) traverse the membrane as a helical segment. Topologically, residues 205–245 (FIIKAVAAHEKGMRDQAKKMGIKSLRNEEAQKTSAECRLAK) are cytoplasmic. The helical transmembrane segment at 246-267 (IAMTTVALWFIAWTPCLLINWV) threads the bilayer. The Extracellular segment spans residues 268-278 (GMFARSYLSPV). The helical transmembrane segment at 279–300 (YTIWGYVFAKANAVYNPIVYAI) threads the bilayer. An N6-(retinylidene)lysine modification is found at K288.

It belongs to the G-protein coupled receptor 1 family. Opsin subfamily. As to quaternary structure, homodimer. Interacts with GNAQ. Contains one covalently linked retinal chromophore.

The protein localises to the cell projection. The protein resides in the rhabdomere membrane. Photoreceptor required for image-forming vision at low light intensity. Can use both retinal and 3-dehydroretinal as visual pigment. Light-induced isomerization of 11-cis to all-trans retinal triggers a conformational change that activates signaling via G-proteins. Signaling via GNAQ probably mediates the activation of phospholipase C. The protein is Rhodopsin (RHO) of Procambarus seminolae (Crayfish).